The primary structure comprises 148 residues: Putative nickel-responsive regulator (148 aa).

Ni(2+) is bound by residues His77, His88, His90, and Cys96.

This sequence belongs to the transcriptional regulatory CopG/NikR family. It depends on Ni(2+) as a cofactor.

Its function is as follows. Transcriptional regulator. This chain is Putative nickel-responsive regulator, found in Bradyrhizobium diazoefficiens (strain JCM 10833 / BCRC 13528 / IAM 13628 / NBRC 14792 / USDA 110).